The sequence spans 985 residues: MAFRGPDPYLPASLLSQRLKAGEKTLDLEFEILSVGFNEEGRYALRLSAENPLQAGSSAGVQLQVNDGDPLPACSAVTEVIEQQDPGQSLTFTRNKFIFTLPKGFCKNDGQSDAHLRVEALRLDGSSGQEAQRVGEAIFPIYPRPDEPRMNLTAQDHEDLYRYCGNLALLRASEDPTARHCGGLAYSVAFHVHRDPRSSVSDCQLEPSQPELQTSREALSDKIEESYMSPFSTDSDQEGLSWEAGPWQHPAQVPEEPQGRLDTSQDPYPAANYLAPCNKETITVTLYGATNLPAGKDGSEPWPYVVVKTTSEKANKHSPQAMTSVTSEPTRAPVWGDTVNVEIQAEDTGREDLILKVMDNKRKKELVSYDIPIKYLRIFHPYQFKLEKVFLRGVNEPLVNSLKPMVVIARVVPNYTEFKARQARRDPASVGLPLTQVSFPISSPMNFDVPRINQNGYPQLSKPGGPPEQPLWNQSFLFQARDGATSFSENTALVLEYYPSASMQSSEPWALNQPLGVSVLPLKSRLYHKMLTGKHLQGLQVERLPIMRPENFLTPNNSKALPTINPKILDENLGAIRESWSMSSLDSAQEVEELQPRDVEMNNYRRAMQKMAEDILALKKQANILEEENGMLRSHLSQQSIEEQSRAEEENLAVSMKQKLLLNELDMKRLRDRVQHLQNELIRKNDREKELLLLYQAQQPQAAQLRRYQDKLQKMKALEDTVRHQEKVIEKMEQILEERLCERKEPIPSNRPQGKPIMASGIPLGPMGETLAVDLYSMLLAENTRLRTELEKNRQQSAPIILQQQALPVDPRELGAGGDLAERLQDTNGPGHPKSTETLPAQVGVPGGYSTAQAAPGAPAVHKPKINIWSSGGMRTQDFLGGTSDKFNLLAKLEQAQSRILSLENQLEESARHWAREKQNLAIRLQEQQHGFGQPPNSIIIDQPNAGASKNPQQLSKLEPSLPSSDKKLNRPSDSQIEISNNQKT.

The segment at 228–263 (MSPFSTDSDQEGLSWEAGPWQHPAQVPEEPQGRLDT) is disordered. Positions 263-398 (TSQDPYPAAN…VFLRGVNEPL (136 aa)) constitute a C2 domain. A coiled-coil region spans residues 599–745 (VEMNNYRRAM…LEERLCERKE (147 aa)). Positions 821-842 (AERLQDTNGPGHPKSTETLPAQ) are disordered. A coiled-coil region spans residues 885–928 (DKFNLLAKLEQAQSRILSLENQLEESARHWAREKQNLAIRLQEQ). A disordered region spans residues 931-985 (GFGQPPNSIIIDQPNAGASKNPQQLSKLEPSLPSSDKKLNRPSDSQIEISNNQKT). Composition is skewed to polar residues over residues 946-956 (AGASKNPQQLS) and 972-985 (PSDSQIEISNNQKT).

In Mus musculus (Mouse), this protein is Coiled-coil domain-containing protein 33 (Ccdc33).